A 172-amino-acid chain; its full sequence is Scytalone dehydratase (172 aa).

Tyr-30, Tyr-50, and Phe-53 together coordinate substrate. Catalysis depends on residues His-85 and His-110. Position 131 (Asn-131) interacts with substrate.

Belongs to the scytalone dehydratase family. As to quaternary structure, homotrimer. Each subunit contains an active site, located in the central part of the hydrophobic core of the monomer, which functions independently.

The protein resides in the endosome. It carries out the reaction scytalone = 1,3,8-trihydroxynaphthalene + H2O. Its pathway is pigment biosynthesis; melanin biosynthesis. With respect to regulation, (N-phenoxypropyl)-carboxamides such as carpropamid and derivatives of norephedrine act as inhibitors of scytalone dehydratase activity. Functionally, scytalone dehydratase; part of the gene cluster that mediates the biosynthesis of dihydroxynaphthalene melanin, a bluish-green pigment and a structural component of the conidial wall. Within the pathway, catalyzes the dehydration of scytalone as well as of vermelone. Is also able to dehydrate the alternate substrate 2,3-dihydro-2,5-dihydroxy-4H-benzopyran-4-one (DDBO) to 5-hydroxy-4H-1-benzopyran-4-one (HBO). The protein is Scytalone dehydratase (SDH1) of Pyricularia oryzae (strain 70-15 / ATCC MYA-4617 / FGSC 8958) (Rice blast fungus).